Consider the following 937-residue polypeptide: MTDYKDTLNLPQTEFPMRGNLAQREPEMLAHWEAAKRYRKLREVCAGRPRFVLADGPPYANGNIHIGHAVNKILKDIIVKSRTLAGFDAAYIPGWDCHGLPIELQVEKKIGKVGHEVDAAAFRKACREYALEQVDSQRQDFKRLGVLGDWEKPYLTMDYQVEADTVRALGRIIERGHLMKGEKPVHWCVDCGSALAEAEVEYEDKTSQAIDVRFRVEDELDLLRRCALDGDGEGPISVVIWTTTPWTLPANQAVCLHPELSYALVRVGDERLLLAEELVEPAMKRYGFSDARIIGRCQGAALEGALLHHPFLDRQVPVILGEHVTLEAGTGCVHTAPGHGQDDYIVGLRYGLAVDNPVGPDGKFLPGTEFFAGESVHQANGHVIEVLRERGALVLAEKLRHSYPHCWRHKTPIIFRATPQWFISMEQAELREQALKAIQQVQWVPQWGQARIEGMVSGRPDWCISRQRNWGVPIPLFVHLETGRLHPDTPALIEAVAQRIEAQGIEAWFSLDPQELLGKDAAAYQKVSDTLDVWFDSGVTHATVTDKRAELGLPADLYLEGSDQHRGWFQSSLLTSVAMRGTAPYKAVLTHGFTVDAQGQKMSKSKGNVVAPQKVVDTLGADILRLWVAATDYSAEMAVSDEILKRTADAYRRMRNTARFLLANLTGFDPARDMLAPGQMLPLDRWAVDQALKVQQKVTGAYEQYQFHQIYQRVHNFCSVELGSFYLDVIKDRQYTTKADSIARRSAQTAMYHIIEAMVRWLAPILSFTAEEIWQEIPGERNESVLFNTWYQGLFALDASEPMNEAFWATLLDVRQAVNREMEKLRAAKASSLDAEVDLYCEPALAETLEGLGEELRFVLITSYARVHGAASRPDDAVETPLEDGTSLWTRVTRSEHAKCPRCWHHREDIGASSDHPELCGRCVENVAGDGEQRRFA.

A 'HIGH' region motif is present at residues 58-68; that stretch reads PYANGNIHIGH. Glu560 lines the L-isoleucyl-5'-AMP pocket. Residues 601 to 605 carry the 'KMSKS' region motif; it reads KMSKS. Position 604 (Lys604) interacts with ATP. Residues Cys900, Cys903, Cys920, and Cys923 each coordinate Zn(2+).

The protein belongs to the class-I aminoacyl-tRNA synthetase family. IleS type 1 subfamily. Monomer. Requires Zn(2+) as cofactor.

The protein resides in the cytoplasm. It carries out the reaction tRNA(Ile) + L-isoleucine + ATP = L-isoleucyl-tRNA(Ile) + AMP + diphosphate. In terms of biological role, catalyzes the attachment of isoleucine to tRNA(Ile). As IleRS can inadvertently accommodate and process structurally similar amino acids such as valine, to avoid such errors it has two additional distinct tRNA(Ile)-dependent editing activities. One activity is designated as 'pretransfer' editing and involves the hydrolysis of activated Val-AMP. The other activity is designated 'posttransfer' editing and involves deacylation of mischarged Val-tRNA(Ile). In Thioalkalivibrio sulfidiphilus (strain HL-EbGR7), this protein is Isoleucine--tRNA ligase.